An 88-amino-acid polypeptide reads, in one-letter code: Beta-insect excitatory toxin 2 (88 aa).

Positions 1–18 (MKFLLLFLVVLPIMGVLG) are cleaved as a signal peptide. The region spanning 20–83 (KNGYAVDSSG…ISDTRKSYCD (64 aa)) is the LCN-type CS-alpha/beta domain. Disulfide bonds link cysteine 34-cysteine 55, cysteine 40-cysteine 60, cysteine 44-cysteine 62, and cysteine 56-cysteine 82.

The protein belongs to the long (4 C-C) scorpion toxin superfamily. Sodium channel inhibitor family. Beta subfamily. As to expression, expressed by the venom gland.

It is found in the secreted. Functionally, excitatory insect beta-toxins induce a spastic paralysis. They bind voltage-independently at site-4 of sodium channels (Nav) and shift the voltage of activation toward more negative potentials thereby affecting sodium channel activation and promoting spontaneous and repetitive firing. This toxin is active only on insects. The chain is Beta-insect excitatory toxin 2 from Androctonus australis (Sahara scorpion).